The chain runs to 366 residues: Class I histocompatibility antigen, Gogo-C*0201 alpha chain (366 aa).

The first 24 residues, 1 to 24, serve as a signal peptide directing secretion; it reads MRVMAPRTLILPLSGALALTETWA. The alpha-1 stretch occupies residues 25–114; it reads GSHSMRYFYT…LRGYYNQSED (90 aa). Topologically, residues 25–308 are extracellular; that stretch reads GSHSMRYFYT…EPSSQPTIPI (284 aa). N-linked (GlcNAc...) asparagine glycosylation is present at asparagine 110. Residues 115–206 are alpha-2; it reads GSHTLQSMYG…ENGKETLQRA (92 aa). 2 disulfide bridges follow: cysteine 125-cysteine 188 and cysteine 227-cysteine 283. The segment at 207–298 is alpha-3; the sequence is EPPKTHVTHH…GLPEPLTLRW (92 aa). In terms of domain architecture, Ig-like C1-type spans 209–297; that stretch reads PKTHVTHHPL…EGLPEPLTLR (89 aa). Positions 299–308 are connecting peptide; that stretch reads EPSSQPTIPI. A helical membrane pass occupies residues 309–333; sequence VGIVVGLAVLVVLAVLGAVVTAMMC. Topologically, residues 334-366 are cytoplasmic; the sequence is RRKSSGGKGGSCSQAACSNSAQGSDESLITCKA.

This sequence belongs to the MHC class I family. Heterodimer of an alpha chain and a beta chain (beta-2-microglobulin).

It localises to the membrane. Involved in the presentation of foreign antigens to the immune system. This is Class I histocompatibility antigen, Gogo-C*0201 alpha chain from Gorilla gorilla gorilla (Western lowland gorilla).